The sequence spans 250 residues: MVFEENSDEVRVITLDHPNKHNPFSRTLETSVKDALARANADDSVRAVVVYGGAERSFSAGGDFNEVKQLSRSEDIEEWIDRVIDLYQAVLNVNKPTIAAVDGYAIGMGFQFALMFDQRLMASTANFVMPELKHGIGCSVGAAILGFTHGFSTMQEIIYQCQSLDAPRCVDYRLVNQVVESSALLDAAITQAHVMASYPASAFINTKRAVNKPFIHLLEQTRDASKAVHKAAFQARDAQGHFKNVLGKKY.

60 to 64 (AGGDF) is a malonyl-CoA binding site.

Belongs to the enoyl-CoA hydratase/isomerase family. In terms of assembly, homotrimer.

It carries out the reaction (S)-1-pyrroline-5-carboxylate + malonyl-CoA + H2O + H(+) = (2S,5S)-5-carboxymethylproline + CO2 + CoA. It participates in antibiotic biosynthesis; carbapenem biosynthesis. Its function is as follows. Catalyzes the formation of (2S,5S)-carboxymethylproline (t-CMP) from malonyl-CoA and (S)-1-pyrroline-5-carboxylate, the first step in the biosynthesis of (5R)-carbapen-2-em-3-carboxylate, a beta-lactam antibiotic of the carbapenem class. Also catalyzes the independent decarboxylation of malonyl-CoA and methylmalonyl-CoA and the hydrolysis of CoA esters such as acetyl-CoA and propionyl-CoA. Catalyzes the reaction with a C2 epimeric mixture of methylmalonyl-CoA to give a 55:45 mixture of (6R)- and (6S)-epimers of 6-methyl-t-CMP, under standard incubation conditions. In Pectobacterium carotovorum subsp. carotovorum (Erwinia carotovora subsp. carotovora), this protein is Carboxymethylproline synthase.